The following is a 166-amino-acid chain: Ureidoglycolate lyase (166 aa).

This sequence belongs to the ureidoglycolate lyase family. In terms of assembly, homodimer. Ni(2+) serves as cofactor.

It catalyses the reaction (S)-ureidoglycolate = urea + glyoxylate. The protein operates within nitrogen metabolism; (S)-allantoin degradation. Catalyzes the catabolism of the allantoin degradation intermediate (S)-ureidoglycolate, generating urea and glyoxylate. Involved in the utilization of allantoin as nitrogen source. The protein is Ureidoglycolate lyase of Agrobacterium fabrum (strain C58 / ATCC 33970) (Agrobacterium tumefaciens (strain C58)).